The primary structure comprises 270 residues: MITLSTLKKYKKEGRKFSCLTCYDAMFAKMMQNAQVDTILIGDSLGMVVQGNDSTLPVTVEDIVYHTGNVSRSNKHALILADLPFMSYVTVEDAIANTRKVMQAGAQVIKLEGGAELSEMVTTLTKAGAPICVHLGLTPQSVNVFGGYKVQGKSDDAAAKLMSDVHAVVAAGASLILLECVPASLAKAVTEAVDVPVIGIGAGADTDGQVLVMHDMLGVTHGRTARFVHDFLTDERNQKSEYAGSVEGAFALFHNSVIEGSYPQAEHQFN.

D43 and D82 together coordinate Mg(2+). 3-methyl-2-oxobutanoate contacts are provided by residues 43 to 44, D82, and K110; that span reads DS. Residue E112 participates in Mg(2+) binding. The active-site Proton acceptor is E179.

This sequence belongs to the PanB family. Homodecamer; pentamer of dimers. Mg(2+) is required as a cofactor.

The protein localises to the cytoplasm. The catalysed reaction is 3-methyl-2-oxobutanoate + (6R)-5,10-methylene-5,6,7,8-tetrahydrofolate + H2O = 2-dehydropantoate + (6S)-5,6,7,8-tetrahydrofolate. The protein operates within cofactor biosynthesis; (R)-pantothenate biosynthesis; (R)-pantoate from 3-methyl-2-oxobutanoate: step 1/2. Functionally, catalyzes the reversible reaction in which hydroxymethyl group from 5,10-methylenetetrahydrofolate is transferred onto alpha-ketoisovalerate to form ketopantoate. The polypeptide is 3-methyl-2-oxobutanoate hydroxymethyltransferase (Psychrobacter sp. (strain PRwf-1)).